Reading from the N-terminus, the 359-residue chain is 4-hydroxy-3-methylbut-2-en-1-yl diphosphate synthase (flavodoxin) (359 aa).

Residues Cys264, Cys267, Cys299, and Glu306 each contribute to the [4Fe-4S] cluster site.

The protein belongs to the IspG family. [4Fe-4S] cluster serves as cofactor.

It catalyses the reaction (2E)-4-hydroxy-3-methylbut-2-enyl diphosphate + oxidized [flavodoxin] + H2O + 2 H(+) = 2-C-methyl-D-erythritol 2,4-cyclic diphosphate + reduced [flavodoxin]. The protein operates within isoprenoid biosynthesis; isopentenyl diphosphate biosynthesis via DXP pathway; isopentenyl diphosphate from 1-deoxy-D-xylulose 5-phosphate: step 5/6. Converts 2C-methyl-D-erythritol 2,4-cyclodiphosphate (ME-2,4cPP) into 1-hydroxy-2-methyl-2-(E)-butenyl 4-diphosphate. The sequence is that of 4-hydroxy-3-methylbut-2-en-1-yl diphosphate synthase (flavodoxin) from Helicobacter pylori (strain P12).